The sequence spans 308 residues: Protoheme IX farnesyltransferase 2 (308 aa).

Transmembrane regions (helical) follow at residues 20–40 (VTKP…FLLA), 47–67 (AVLM…GCAI), 92–114 (IPLK…LLAW), 118–137 (LAAL…LYSL), 144–164 (VYGT…GYCA), 174–194 (LILL…IAIF), 218–238 (LHIV…PLAG), 240–260 (TGVG…LMAL), and 275–295 (QVFG…ALDF).

Belongs to the UbiA prenyltransferase family. Protoheme IX farnesyltransferase subfamily.

The protein resides in the cell inner membrane. The enzyme catalyses heme b + (2E,6E)-farnesyl diphosphate + H2O = Fe(II)-heme o + diphosphate. It functions in the pathway porphyrin-containing compound metabolism; heme O biosynthesis; heme O from protoheme: step 1/1. In terms of biological role, converts heme B (protoheme IX) to heme O by substitution of the vinyl group on carbon 2 of heme B porphyrin ring with a hydroxyethyl farnesyl side group. In Shewanella loihica (strain ATCC BAA-1088 / PV-4), this protein is Protoheme IX farnesyltransferase 2.